The following is a 541-amino-acid chain: Tripeptidyl aminopeptidase (541 aa).

A signal peptide spans 1–36 (MRKSSIRRRATAFGTAGALVTATLIAGAVSAPAASA). A propeptide spanning residues 37–39 (APA) is cleaved from the precursor. One can recognise an AB hydrolase-1 domain in the interval 123-501 (GALIYNPGGP…SRLITERDAG (379 aa)). Catalysis depends on Ser-249, which acts as the Nucleophile. The active site involves Asp-474. The Proton donor role is filled by His-503.

The protein belongs to the peptidase S33 family.

Its subcellular location is the secreted. In terms of biological role, cleaves tripeptides from the N-termini of proteins. Does not cleave mono- or dipeptides, or N-terminally blocked peptides. The polypeptide is Tripeptidyl aminopeptidase (Streptomyces coelicolor (strain ATCC BAA-471 / A3(2) / M145)).